The following is a 540-amino-acid chain: MRVNNGLTPQELEAYGISDVHDIVYNPSYDLLYQEELDPSLTGYERGVLTNLGAVAVDTGIFTGRSPKDKYIVRDDTTRDTFWWADKGKGKNDNKPLSPETWQHLKGLVTKQLSGKRLFVVDAFCGANPDTRLSVRFITEVAWQAHFVKNMFIRPSDEELAGFKPDFIVMNGAKCTNPQWKEQGLNSENFVAFNLTERMQLIGGTWYGGEMKKGMFSMMNYLLPLKGIASMHCSANVGEKGDVAVFFGLSGTGKTTLSTDPKRRLIGDDEHGWDDDGVFNFEGGCYAKTIKLSKEAEPEIYNAIRRDALLENVTVREDGTIDFDDGSKTENTRVSYPIYHIDNIVKPVSKAGHATKVIFLTADAFGVLPPVSRLTADQTQYHFLSGFTAKLAGTERGITEPTPTFSACFGAAFLSLHPTQYAEVLVKRMQAAGAQAYLVNTGWNGTGKRISIKDTRAIIDAILNGSLDNAETFTLPMFNLAIPTELPGVDTKILDPRNTYASPEQWQEKAETLAKLFIDNFDKYTDTPAGAALVAAGPKL.

Arginine 65 serves as a coordination point for substrate. Residue lysine 87 is modified to N6-acetyllysine. The substrate site is built by tyrosine 207 and lysine 213. ATP is bound by residues lysine 213, histidine 232, and 248–256 (GLSGTGKTT). Mn(2+)-binding residues include lysine 213 and histidine 232. Aspartate 269 lines the Mn(2+) pocket. ATP-binding positions include glutamate 297, arginine 333, 449–450 (RI), and threonine 455. Arginine 333 contacts substrate. Position 523 is an N6-acetyllysine (lysine 523).

Belongs to the phosphoenolpyruvate carboxykinase (ATP) family. In terms of assembly, monomer. The cofactor is Mn(2+).

It is found in the cytoplasm. It catalyses the reaction oxaloacetate + ATP = phosphoenolpyruvate + ADP + CO2. The protein operates within carbohydrate biosynthesis; gluconeogenesis. In terms of biological role, involved in the gluconeogenesis. Catalyzes the conversion of oxaloacetate (OAA) to phosphoenolpyruvate (PEP) through direct phosphoryl transfer between the nucleoside triphosphate and OAA. This chain is Phosphoenolpyruvate carboxykinase (ATP), found in Escherichia coli O6:K15:H31 (strain 536 / UPEC).